Here is an 817-residue protein sequence, read N- to C-terminus: Ribonuclease R 1 (817 aa).

The 326-residue stretch at 259-584 folds into the RNB domain; the sequence is RVDYRNEITF…DLLVHRLIRE (326 aa). An S1 motif domain is found at 637–717; the sequence is GEEYEGIIAS…MTGEIDFEYL (81 aa). Residues 728–817 form a disordered region; it reads AKAKKKPDHK…DGRKKPHKRG (90 aa). Residues 729–742 show a composition bias toward basic residues; that stretch reads KAKKKPDHKGRKKS. Basic and acidic residues-rich tracts occupy residues 767–777 and 795–810; these read RRADEKFEFDK and KFTD…TDGR.

Belongs to the RNR ribonuclease family. RNase R subfamily.

Its subcellular location is the cytoplasm. It carries out the reaction Exonucleolytic cleavage in the 3'- to 5'-direction to yield nucleoside 5'-phosphates.. Functionally, 3'-5' exoribonuclease that releases 5'-nucleoside monophosphates and is involved in maturation of structured RNAs. In Lactococcus lactis subsp. lactis (strain IL1403) (Streptococcus lactis), this protein is Ribonuclease R 1 (rnr1).